The following is a 133-amino-acid chain: Histone H2A.Z (133 aa).

Over residues 1–11 (MSGKGKVHGGK) the composition is skewed to basic residues. The segment at 1-30 (MSGKGKVHGGKGKSSDSAKASTSHSARAGL) is disordered. S2 bears the N-acetylserine mark. An N6-acetyllysine mark is found at K4, K11, and K13. The segment covering 15–26 (SDSAKASTSHSA) has biased composition (low complexity).

This sequence belongs to the histone H2A family. The nucleosome is a histone octamer containing two molecules each of H2A, H2B, H3 and H4 assembled in one H3-H4 heterotetramer and two H2A-H2B heterodimers. The octamer wraps approximately 147 bp of DNA. H2A or its variant H2A.Z forms a heterodimer with H2B. H2A.Z associates with the VPS72/SWC2 subunit of the SWR1 chromatin remodeling complex. Also interacts with RBP1/DNA-directed RNA polymerase II largest subunit. Post-translationally, acetylated once deposited into chromatin.

The protein localises to the nucleus. It is found in the chromosome. Its function is as follows. Variant histone H2A which can replace H2A in some nucleosomes. Nucleosomes wrap and compact DNA into chromatin, limiting DNA accessibility to the cellular machineries which require DNA as a template. Histones thereby play a central role in transcription regulation, DNA repair, DNA replication and chromosomal stability. DNA accessibility is regulated via a complex set of post-translational modifications of histones, also called histone code, and nucleosome remodeling. This variant is enriched at promoters, it may keep them in a repressed state until the appropriate activation signal is received. Near telomeres, it may counteract gene silencing caused by the spread of heterochromatin proteins. Required for the RNA polymerase II and SPT15/TBP recruitment to the target genes. Involved in chromosome stability. This Meyerozyma guilliermondii (strain ATCC 6260 / CBS 566 / DSM 6381 / JCM 1539 / NBRC 10279 / NRRL Y-324) (Yeast) protein is Histone H2A.Z (HTZ1).